We begin with the raw amino-acid sequence, 649 residues long: Acetyl-coenzyme A synthetase (649 aa).

CoA-binding positions include R198–K201, T317, and N341. ATP-binding positions include G393 to P395, D417 to T422, D506, and R521. S529 contributes to the CoA binding site. R532 contributes to the ATP binding site. The Mg(2+) site is built by V543, H545, and V548. Position 612 is an N6-acetyllysine (K612). The tract at residues Q625 to L649 is disordered.

It belongs to the ATP-dependent AMP-binding enzyme family. Mg(2+) serves as cofactor. Acetylated. Deacetylation by the SIR2-homolog deacetylase activates the enzyme.

The enzyme catalyses acetate + ATP + CoA = acetyl-CoA + AMP + diphosphate. Functionally, catalyzes the conversion of acetate into acetyl-CoA (AcCoA), an essential intermediate at the junction of anabolic and catabolic pathways. AcsA undergoes a two-step reaction. In the first half reaction, AcsA combines acetate with ATP to form acetyl-adenylate (AcAMP) intermediate. In the second half reaction, it can then transfer the acetyl group from AcAMP to the sulfhydryl group of CoA, forming the product AcCoA. This Deinococcus radiodurans (strain ATCC 13939 / DSM 20539 / JCM 16871 / CCUG 27074 / LMG 4051 / NBRC 15346 / NCIMB 9279 / VKM B-1422 / R1) protein is Acetyl-coenzyme A synthetase.